The chain runs to 258 residues: Alpha-fibrinogenase albofibrase (258 aa).

The signal sequence occupies residues 1–18 (MVLIRVLANLLILQLSYA). Residues 19–24 (QKSSEL) constitute a propeptide that is removed on maturation. Residues 25-249 (VVGGDECNIN…YNDWIQSIIA (225 aa)) enclose the Peptidase S1 domain. Disulfide bonds link Cys-31–Cys-163, Cys-50–Cys-66, Cys-98–Cys-256, Cys-142–Cys-210, Cys-174–Cys-189, and Cys-200–Cys-225. An N-linked (GlcNAc...) asparagine glycan is attached at Asn-44. Active-site charge relay system residues include His-65 and Asp-110. The active-site Charge relay system is the Ser-204.

Belongs to the peptidase S1 family. Snake venom subfamily. In terms of assembly, monomer. Expressed by the venom gland.

The protein resides in the secreted. In terms of biological role, the recombinant protein has fibrinogenolytic activity against the Aalpha chain (FGA) of fibrinogen. Activates plasminogen (PLG) (is 4-fold less active than urokinase). Has weak thrombin-like enzyme activity. Has enzymatic activity against a trypsin-like substrate (S-3013) and shows a weaker activity on an activated protein C substrate (S-3125). The chain is Alpha-fibrinogenase albofibrase from Trimeresurus albolabris (White-lipped pit viper).